A 241-amino-acid chain; its full sequence is Carboxysome assembly protein CcmN (241 aa).

The tract at residues 123–206 (GASSPTTDSV…PTAPTVVTTA (84 aa)) is disordered. Residues 185 to 195 (QISSNRSPGES) show a composition bias toward polar residues. A compositionally biased stretch (low complexity) spans 196-206 (TPTAPTVVTTA). Positions 219 to 241 (VVGQVYINQLLLTLFPERRYFSS) match the Encapsulation peptide motif.

This sequence belongs to the CcmN family. In terms of assembly, interacts with full-length and the N-terminal 249 residues of CcmM; a probable CcmM-CcaA-CcmN complex can also be isolated. Interacts with CcmK.

The protein localises to the carboxysome. In terms of biological role, required for carboxysome formation; the N-terminus interacts with CcmM which itself binds RuBisCO (ribulose bisphosphate carboxylase, rbcL-rbcS). May also contact shell protein CcmK to help assemble the carboxysome. Its function is as follows. Beta-carboxysome assembly initiates when soluble RuBisCO is condensed into a liquid matrix in a pre-carboxysome by the RbcS-like domains of probably both forms of CcmM. CcmN interacts with the N-terminus of full-length CcmM, and then recruits the CcmK major shell protein via CcmN's encapsulation peptide. Shell formation requires CcmK proteins and CcmO. CcmL caps the otherwise elongated carboxysome. Once fully encapsulated carboxysomes are formed, they migrate within the cell probably via interactions with the cytoskeleton. This chain is Carboxysome assembly protein CcmN, found in Synechocystis sp. (strain ATCC 27184 / PCC 6803 / Kazusa).